A 616-amino-acid chain; its full sequence is General alpha-glucoside permease (616 aa).

Topologically, residues 1-115 (MKNIISLVSK…AALWSILVST (115 aa)) are cytoplasmic. Positions 15 to 27 (SKNEDKNISESSR) are enriched in basic and acidic residues. Positions 15–40 (SKNEDKNISESSRDIVNQQEVFNTED) are disordered. The helical transmembrane segment at 116–136 (TLVMEGYDTALLSALYALPVF) threads the bilayer. Topologically, residues 137-160 (QRKFGTLNGEGSYEITSQWQIGLN) are extracellular. A helical transmembrane segment spans residues 161-181 (MCVLCGEMIGLQITTYMVEFM). The Cytoplasmic portion of the chain corresponds to 182 to 191 (GNRYTMITAL). The helical transmembrane segment at 192-212 (GLLTAYIFILYYCKSLAMIAV) threads the bilayer. The Extracellular portion of the chain corresponds to 213 to 214 (GQ). Residues 215 to 235 (ILSAIPWGCFQSLAVTYASEV) form a helical membrane-spanning segment. Residues 236 to 242 (CPLALRY) lie on the Cytoplasmic side of the membrane. The chain crosses the membrane as a helical span at residues 243 to 263 (YMTSYSNICWLFGQIFASGIM). The Extracellular portion of the chain corresponds to 264–278 (KNSQENLGNSDLGYK). A helical transmembrane segment spans residues 279–299 (LPFALQWIWPAPLMIGIFFAP). At 300 to 373 (ESPWWLVRKD…VNGRRTRLAC (74 aa)) the chain is on the cytoplasmic side. Residues 374-394 (LTWVAQNSSGAVLLGYSTYFF) form a helical membrane-spanning segment. Residues 395 to 404 (ERAGMATDKA) are Extracellular-facing. The chain crosses the membrane as a helical span at residues 405 to 425 (FTFSLIQYCLGLAGTLCSWVI). The Cytoplasmic portion of the chain corresponds to 426-433 (SGRVGRWT). Residues 434-454 (ILTYGLAFQMVCLFIIGGMGF) form a helical membrane-spanning segment. Over 455–466 (GSGSSASNGAGG) the chain is Extracellular. Residues 467–487 (LLLALSFFYNAGIGAVVYCIV) traverse the membrane as a helical segment. Topologically, residues 488 to 504 (AEIPSAELRTKTIVLAR) are cytoplasmic. The helical transmembrane segment at 505–525 (ICYNLMAVINAILTPYMLNVS) threads the bilayer. At 526–532 (DWNWGAK) the chain is on the extracellular side. Residues 533 to 553 (TGLYWGGFTAVTLAWVIIDLP) form a helical membrane-spanning segment. The Cytoplasmic portion of the chain corresponds to 554 to 616 (ETTGRTFSEI…QRELNAADKC (63 aa)). The tract at residues 587-616 (GKTQHDSLADESISQSSSIKQRELNAADKC) is disordered. Positions 606-616 (KQRELNAADKC) are enriched in basic and acidic residues.

It belongs to the major facilitator superfamily. Sugar transporter (TC 2.A.1.1) family.

Its subcellular location is the cell membrane. In terms of biological role, high-affinity uptake of alpha-glucosides such as maltose, turanose, isomaltose, alpha-methylglucoside, maltotriose, palatinose, trehalose, melezitose and glucose. Acts with the concomitant transport of protons into the cell (symport system). Provides an alternative and minor mechanism for growth on trehalose carbon source by transporting trehalose into the cytoplasm for conversion to glucose by neutral trehalase NTH1. The protein is General alpha-glucoside permease of Saccharomyces cerevisiae (strain CEN.PK113-7D) (Baker's yeast).